A 100-amino-acid polypeptide reads, in one-letter code: Aspartyl/glutamyl-tRNA(Asn/Gln) amidotransferase subunit C (100 aa).

The protein belongs to the GatC family. As to quaternary structure, heterotrimer of A, B and C subunits.

The catalysed reaction is L-glutamyl-tRNA(Gln) + L-glutamine + ATP + H2O = L-glutaminyl-tRNA(Gln) + L-glutamate + ADP + phosphate + H(+). It catalyses the reaction L-aspartyl-tRNA(Asn) + L-glutamine + ATP + H2O = L-asparaginyl-tRNA(Asn) + L-glutamate + ADP + phosphate + 2 H(+). Allows the formation of correctly charged Asn-tRNA(Asn) or Gln-tRNA(Gln) through the transamidation of misacylated Asp-tRNA(Asn) or Glu-tRNA(Gln) in organisms which lack either or both of asparaginyl-tRNA or glutaminyl-tRNA synthetases. The reaction takes place in the presence of glutamine and ATP through an activated phospho-Asp-tRNA(Asn) or phospho-Glu-tRNA(Gln). This chain is Aspartyl/glutamyl-tRNA(Asn/Gln) amidotransferase subunit C, found in Staphylococcus carnosus (strain TM300).